The following is a 450-amino-acid chain: Glucose-6-phosphate isomerase (450 aa).

Glu-289 functions as the Proton donor in the catalytic mechanism. Residues His-310 and Lys-424 contribute to the active site.

It belongs to the GPI family.

The protein localises to the cytoplasm. It catalyses the reaction alpha-D-glucose 6-phosphate = beta-D-fructose 6-phosphate. The protein operates within carbohydrate biosynthesis; gluconeogenesis. It participates in carbohydrate degradation; glycolysis; D-glyceraldehyde 3-phosphate and glycerone phosphate from D-glucose: step 2/4. Functionally, catalyzes the reversible isomerization of glucose-6-phosphate to fructose-6-phosphate. The sequence is that of Glucose-6-phosphate isomerase from Leptospira biflexa serovar Patoc (strain Patoc 1 / Ames).